A 175-amino-acid polypeptide reads, in one-letter code: MPLRPARCYKRIKRPYTRLKYIHGAPYVQIPRFEMGATKAKDRERFTSVAVLRVLEGGQIRVNALEAARQMAYKYLSKVLTDQNFYLKIIKYPHHVIRENKMLAMAGADRLQEGMRLAFGVPTGRAIQIEPGEVLMIVEVEDRNITHAKEALNRARAKLPLPCRIELTRKSVIKG.

The protein belongs to the universal ribosomal protein uL16 family.

This Caldivirga maquilingensis (strain ATCC 700844 / DSM 13496 / JCM 10307 / IC-167) protein is Large ribosomal subunit protein uL16.